A 977-amino-acid polypeptide reads, in one-letter code: Serine/threonine-protein kinase/endoribonuclease IRE1 (977 aa).

A signal peptide spans 1 to 18 (MPARRLLLLLTLLLPGLG). The Lumenal portion of the chain corresponds to 19–443 (IFGSTSTVTL…EAPVDSMLKD (425 aa)). Asparagine 176 carries an N-linked (GlcNAc...) asparagine glycan. Residues 410–419 (TSENAPTTVS) show a composition bias toward polar residues. The tract at residues 410–434 (TSENAPTTVSRDVEEKPAHAPARPE) is disordered. Residues 444–464 (MATIILSTFLLIGWVAFIITY) traverse the membrane as a helical segment. The Cytoplasmic segment spans residues 465–977 (PLSMHQQQQL…PQPPVTPDAL (513 aa)). Positions 491-559 (QQQQQLPFHP…PSLEQDDGDE (69 aa)) are disordered. Positions 513–552 (TSGPYSESSGTSSPSTSPRASNHSLCSGSSASKAGSSPSL) are enriched in low complexity. Residues 571 to 832 (FCPKDVLGHG…AKHVLKHPFF (262 aa)) form the Protein kinase domain. ATP contacts are provided by residues 577–585 (LGHGAEGTI), lysine 599, and 643–645 (ELC). The active-site Proton acceptor is aspartate 688. ATP contacts are provided by residues 690-693 (KPHN) and aspartate 711. A phosphoserine mark is found at serine 724 and serine 729. In terms of domain architecture, KEN spans 835–963 (LEKQLQFFQD…ERLFQPYYFH (129 aa)). An interacts with hydroxy-aryl-aldehyde inhibitors region spans residues 906-907 (NK). Threonine 973 is subject to Phosphothreonine.

This sequence belongs to the protein kinase superfamily. Ser/Thr protein kinase family. In terms of assembly, monomer. Homodimer; disulfide-linked; homodimerization takes place in response to endoplasmic reticulum stress and promotes activation of the kinase and endoribonuclease activities. Dimer formation is driven by hydrophobic interactions within the N-terminal luminal domains and stabilized by disulfide bridges. Interacts (via the luminal region) with DNAJB9/ERdj4; interaction takes place in unstressed cells and promotes recruitment of HSPA5/BiP. Interacts (via the luminal region) with HSPA5/BiP; HSPA5/BiP is a negative regulator of the unfolded protein response (UPR) that prevents homodimerization of ERN1/IRE1 and subsequent activation of the protein. Interaction with HSPA5 also competitively inhibits ERN1 interaction with MANF. Interacts with PDIA6, a negative regulator of the UPR; the interaction is direct and disrupts homodimerization. Interacts with DAB2IP (via PH domain); the interaction occurs in a endoplasmic reticulum stress-induced dependent manner and is required for subsequent recruitment of TRAF2 to ERN1/IRE1. Interacts with TAOK3 and TRAF2. Interacts with RNF13. Interacts with LACC1. Interacts (when unphosphorylated) with DDRGK1; interaction is dependent on UFM1 and takes place in response to endoplasmic reticulum stress, regulating ERN1/IRE1-alpha stability. Interacts (via N-terminus) with P4HB/PDIA1; the interaction is enhanced by phosphorylation of P4HB by FAM20C in response to endoplasmic reticulum stress and results in attenuation of ERN1 activity. Interacts with TMBIM6; this interaction inhibits ERN1 activity. Interacts (via luminal domain) with MANF (via C-terminus); the interaction is decreased in the presence of increasing concentrations of Ca(2+). Mg(2+) is required as a cofactor. Post-translationally, autophosphorylated following homodimerization. Autophosphorylation promotes activation of the endoribonuclease domain. In response to ER stress, phosphorylated at Ser-724, Ser-729 and possibly Ser-726; phosphorylation promotes oligomerization and endoribonuclease activity. Dephosphorylated at Ser-724, Ser-729 and possibly Ser-726 by RPAP2 to abort failed ER-stress adaptation and trigger apoptosis. Phosphorylated at Ser-724; in response to the ER stressor tunicamycin. In terms of processing, ADP-ribosylated by PARP16 upon ER stress, which increases both kinase and endonuclease activities. In terms of tissue distribution, ubiquitously expressed. High levels observed in pancreatic tissue.

The protein localises to the endoplasmic reticulum membrane. It catalyses the reaction L-seryl-[protein] + ATP = O-phospho-L-seryl-[protein] + ADP + H(+). The catalysed reaction is L-threonyl-[protein] + ATP = O-phospho-L-threonyl-[protein] + ADP + H(+). Its activity is regulated as follows. The kinase domain is activated by trans-autophosphorylation following homodimerization. Kinase activity is required for activation of the endoribonuclease domain. Endoribonuclease activity is specifically inhibited by hydroxy-aryl-aldehydes (HAA). In terms of biological role, serine/threonine-protein kinase and endoribonuclease that acts as a key sensor for the endoplasmic reticulum unfolded protein response (UPR). In unstressed cells, the endoplasmic reticulum luminal domain is maintained in its inactive monomeric state by binding to the endoplasmic reticulum chaperone HSPA5/BiP. Accumulation of misfolded proteins in the endoplasmic reticulum causes release of HSPA5/BiP, allowing the luminal domain to homodimerize, promoting autophosphorylation of the kinase domain and subsequent activation of the endoribonuclease activity. The endoribonuclease activity is specific for XBP1 mRNA and excises 26 nucleotides from XBP1 mRNA. The resulting spliced transcript of XBP1 encodes a transcriptional activator protein that up-regulates expression of UPR target genes. Acts as an upstream signal for ER stress-induced GORASP2-mediated unconventional (ER/Golgi-independent) trafficking of CFTR to cell membrane by modulating the expression and localization of SEC16A. The chain is Serine/threonine-protein kinase/endoribonuclease IRE1 from Homo sapiens (Human).